The primary structure comprises 1456 residues: Putative 1-phosphatidylinositol-3-phosphate 5-kinase FAB1D (1456 aa).

Low complexity predominate over residues 1–19; the sequence is MTPSNSLSSSERSLSGECS. 6 disordered regions span residues 1–110, 533–592, 925–944, 967–987, 1003–1022, and 1137–1159; these read MTPS…EVDG, PVSV…NDIE, ENDN…TPLV, VPED…TSPI, NGQE…DDEV, and NNQD…TNRL. The segment covering 43–57 has biased composition (basic and acidic residues); the sequence is ELTKEVKVDRLERKS. A compositionally biased stretch (acidic residues) spans 86–110; sequence REDDSDDVPVWEPPEPENPEDEVDG. Residues 533-544 show a composition bias toward low complexity; sequence PVSVDTDVSTTS. Residues 973–987 show a composition bias toward polar residues; sequence SQTLCSSSPDTTSPI. A PIPK domain is found at 1115–1443; it reads NNEESKKPLS…RFRKFMKTHF (329 aa). The span at 1150–1159 shows a compositional bias: polar residues; it reads RFSSESTNRL.

In terms of assembly, component of the PI(3,5)P2 regulatory complex at least composed of ATG18, SAC/FIG4, FAB1 and VAC14. It depends on Mg(2+) as a cofactor. The cofactor is Mn(2+).

It catalyses the reaction a 1,2-diacyl-sn-glycero-3-phospho-(1D-myo-inositol-3-phosphate) + ATP = a 1,2-diacyl-sn-glycero-3-phospho-(1D-myo-inositol-3,5-bisphosphate) + ADP + H(+). Its function is as follows. The PI(3,5)P2 regulatory complex regulates both the synthesis and turnover of phosphatidylinositol 3,5-bisphosphate (PtdIns(3,5)P2). Catalyzes the phosphorylation of phosphatidylinositol 3-phosphate on the fifth hydroxyl of the myo-inositol ring, to form phosphatidylinositol 3,5-bisphosphate. This Arabidopsis thaliana (Mouse-ear cress) protein is Putative 1-phosphatidylinositol-3-phosphate 5-kinase FAB1D (FAB1D).